The following is a 343-amino-acid chain: RNA-binding protein 43 (343 aa).

Residues 15–90 (RTVVVSGLPV…PRLTVSHFSE (76 aa)) form the RRM domain.

This Mus musculus (Mouse) protein is RNA-binding protein 43 (Rbm43).